Reading from the N-terminus, the 293-residue chain is Formamidopyrimidine-DNA glycosylase (293 aa).

Pro2 (schiff-base intermediate with DNA) is an active-site residue. The active-site Proton donor is Glu3. The active-site Proton donor; for beta-elimination activity is Lys60. 3 residues coordinate DNA: His110, Arg129, and Lys174. The FPG-type zinc finger occupies 259-293 (NVYRRTGKKCHACKNLIERQKISGRSTHWCRKCQK). Catalysis depends on Arg283, which acts as the Proton donor; for delta-elimination activity.

The protein belongs to the FPG family. Monomer. It depends on Zn(2+) as a cofactor.

It catalyses the reaction Hydrolysis of DNA containing ring-opened 7-methylguanine residues, releasing 2,6-diamino-4-hydroxy-5-(N-methyl)formamidopyrimidine.. The enzyme catalyses 2'-deoxyribonucleotide-(2'-deoxyribose 5'-phosphate)-2'-deoxyribonucleotide-DNA = a 3'-end 2'-deoxyribonucleotide-(2,3-dehydro-2,3-deoxyribose 5'-phosphate)-DNA + a 5'-end 5'-phospho-2'-deoxyribonucleoside-DNA + H(+). Its function is as follows. Involved in base excision repair of DNA damaged by oxidation or by mutagenic agents. Acts as a DNA glycosylase that recognizes and removes damaged bases. Has a preference for oxidized purines, such as 7,8-dihydro-8-oxoguanine (8-oxoG). Has AP (apurinic/apyrimidinic) lyase activity and introduces nicks in the DNA strand. Cleaves the DNA backbone by beta-delta elimination to generate a single-strand break at the site of the removed base with both 3'- and 5'-phosphates. This is Formamidopyrimidine-DNA glycosylase from Prochlorococcus marinus (strain MIT 9515).